The primary structure comprises 843 residues: Lon protease (843 aa).

Over residues 1-16 the composition is skewed to basic and acidic residues; it reads MRERKETAMSDKEKKG. A disordered region spans residues 1-22; it reads MRERKETAMSDKEKKGAGAGAQ. One can recognise a Lon N-terminal domain in the interval 42 to 236; sequence LPILPLRNSV…LVLELLNRKR (195 aa). 388–395 lines the ATP pocket; it reads GPPGVGKT. The 182-residue stretch at 627–808 folds into the Lon proteolytic domain; the sequence is TEIAGVATGL…DEVLQAALEE (182 aa). Catalysis depends on residues S714 and K757. The interval 805 to 843 is disordered; it reads ALEENPVGRKPPAAPEPEGEKKPGATPTPPAKKPDEIRV.

Belongs to the peptidase S16 family. Homohexamer. Organized in a ring with a central cavity.

The protein localises to the cytoplasm. It catalyses the reaction Hydrolysis of proteins in presence of ATP.. Functionally, ATP-dependent serine protease that mediates the selective degradation of mutant and abnormal proteins as well as certain short-lived regulatory proteins. Required for cellular homeostasis and for survival from DNA damage and developmental changes induced by stress. Degrades polypeptides processively to yield small peptide fragments that are 5 to 10 amino acids long. Binds to DNA in a double-stranded, site-specific manner. The protein is Lon protease of Anaeromyxobacter dehalogenans (strain 2CP-C).